A 524-amino-acid polypeptide reads, in one-letter code: GMP synthase [glutamine-hydrolyzing] (524 aa).

One can recognise a Glutamine amidotransferase type-1 domain in the interval 5–195 (KVIVIDFGGQ…VRGVCGCAGT (191 aa)). Cysteine 82 functions as the Nucleophile in the catalytic mechanism. Active-site residues include histidine 169 and glutamate 171. The GMPS ATP-PPase domain maps to 196–389 (WKMDAFVENT…LGIPEHLVFR (194 aa)). 223–229 (SGGVDSS) lines the ATP pocket.

Homodimer.

The catalysed reaction is XMP + L-glutamine + ATP + H2O = GMP + L-glutamate + AMP + diphosphate + 2 H(+). It participates in purine metabolism; GMP biosynthesis; GMP from XMP (L-Gln route): step 1/1. Its function is as follows. Catalyzes the synthesis of GMP from XMP. This chain is GMP synthase [glutamine-hydrolyzing], found in Lachnospira eligens (strain ATCC 27750 / DSM 3376 / VPI C15-48 / C15-B4) (Eubacterium eligens).